The following is a 311-amino-acid chain: Mediator of RNA polymerase II transcription subunit 27 (311 aa).

A Phosphoserine modification is found at S132. K134 is subject to N6-methyllysine.

The protein belongs to the Mediator complex subunit 27 family. In terms of assembly, component of the Mediator complex, which is composed of MED1, MED4, MED6, MED7, MED8, MED9, MED10, MED11, MED12, MED13, MED13L, MED14, MED15, MED16, MED17, MED18, MED19, MED20, MED21, MED22, MED23, MED24, MED25, MED26, MED27, MED29, MED30, MED31, CCNC, CDK8 and CDC2L6/CDK11. The MED12, MED13, CCNC and CDK8 subunits form a distinct module termed the CDK8 module. Mediator containing the CDK8 module is less active than Mediator lacking this module in supporting transcriptional activation. Individual preparations of the Mediator complex lacking one or more distinct subunits have been variously termed ARC, CRSP, DRIP, PC2, SMCC and TRAP.

The protein resides in the nucleus. In terms of biological role, component of the Mediator complex, a coactivator involved in the regulated transcription of nearly all RNA polymerase II-dependent genes. Mediator functions as a bridge to convey information from gene-specific regulatory proteins to the basal RNA polymerase II transcription machinery. Mediator is recruited to promoters by direct interactions with regulatory proteins and serves as a scaffold for the assembly of a functional preinitiation complex with RNA polymerase II and the general transcription factors. The polypeptide is Mediator of RNA polymerase II transcription subunit 27 (MED27) (Bos taurus (Bovine)).